The primary structure comprises 157 residues: SsrA-binding protein (157 aa).

The disordered stretch occupies residues 130 to 157 (HDKRQDMAKKDSQRRIQKELGQRQKGME). Basic and acidic residues predominate over residues 132-157 (KRQDMAKKDSQRRIQKELGQRQKGME).

Belongs to the SmpB family.

Its subcellular location is the cytoplasm. In terms of biological role, required for rescue of stalled ribosomes mediated by trans-translation. Binds to transfer-messenger RNA (tmRNA), required for stable association of tmRNA with ribosomes. tmRNA and SmpB together mimic tRNA shape, replacing the anticodon stem-loop with SmpB. tmRNA is encoded by the ssrA gene; the 2 termini fold to resemble tRNA(Ala) and it encodes a 'tag peptide', a short internal open reading frame. During trans-translation Ala-aminoacylated tmRNA acts like a tRNA, entering the A-site of stalled ribosomes, displacing the stalled mRNA. The ribosome then switches to translate the ORF on the tmRNA; the nascent peptide is terminated with the 'tag peptide' encoded by the tmRNA and targeted for degradation. The ribosome is freed to recommence translation, which seems to be the essential function of trans-translation. This chain is SsrA-binding protein, found in Alkaliphilus metalliredigens (strain QYMF).